Reading from the N-terminus, the 323-residue chain is tRNA-dihydrouridine(16) synthase (323 aa).

FMN is bound by residues 7-9 and Gln-68; that span reads PME. Cys-98 acts as the Proton donor in catalysis. FMN is bound by residues Lys-139, 199–201, and 223–224; these read NGE and GR.

It belongs to the Dus family. DusC subfamily. Requires FMN as cofactor.

It catalyses the reaction 5,6-dihydrouridine(16) in tRNA + NADP(+) = uridine(16) in tRNA + NADPH + H(+). The enzyme catalyses 5,6-dihydrouridine(16) in tRNA + NAD(+) = uridine(16) in tRNA + NADH + H(+). In terms of biological role, catalyzes the synthesis of 5,6-dihydrouridine (D), a modified base found in the D-loop of most tRNAs, via the reduction of the C5-C6 double bond in target uridines. Specifically modifies U16 in tRNAs. This is tRNA-dihydrouridine(16) synthase from Pseudomonas putida (strain ATCC 47054 / DSM 6125 / CFBP 8728 / NCIMB 11950 / KT2440).